A 105-amino-acid polypeptide reads, in one-letter code: Large ribosomal subunit protein uL24 (105 aa).

This sequence belongs to the universal ribosomal protein uL24 family. In terms of assembly, part of the 50S ribosomal subunit.

Functionally, one of two assembly initiator proteins, it binds directly to the 5'-end of the 23S rRNA, where it nucleates assembly of the 50S subunit. Its function is as follows. One of the proteins that surrounds the polypeptide exit tunnel on the outside of the subunit. This chain is Large ribosomal subunit protein uL24, found in Staphylococcus aureus (strain Mu3 / ATCC 700698).